Here is a 395-residue protein sequence, read N- to C-terminus: Ribose-phosphate pyrophosphokinase 2, chloroplastic (395 aa).

The span at 1-23 shows a compositional bias: low complexity; the sequence is MASPAPRSLSSSSSSSSSSFCPS. The disordered stretch occupies residues 1–33; that stretch reads MASPAPRSLSSSSSSSSSSFCPSISPPPRSPSR. The transit peptide at 1–42 directs the protein to the chloroplast; the sequence is MASPAPRSLSSSSSSSSSSFCPSISPPPRSPSRASLPFSVKC. The Mg(2+) site is built by Asp209, His211, Asp220, and Asp224. The interval 295 to 310 is binding of phosphoribosylpyrophosphate; it reads GKVAVMLDDMIDTAGT.

It belongs to the ribose-phosphate pyrophosphokinase family.

The protein localises to the plastid. It is found in the chloroplast. It catalyses the reaction D-ribose 5-phosphate + ATP = 5-phospho-alpha-D-ribose 1-diphosphate + AMP + H(+). The protein is Ribose-phosphate pyrophosphokinase 2, chloroplastic (PRS2) of Spinacia oleracea (Spinach).